The chain runs to 163 residues: NADH-quinone oxidoreductase subunit I (163 aa).

2 4Fe-4S ferredoxin-type domains span residues 54–84 (LRRY…IESE) and 94–123 (IVYD…ETQI). Residues Cys64, Cys67, Cys70, Cys74, Cys103, Cys106, Cys109, and Cys113 each coordinate [4Fe-4S] cluster.

This sequence belongs to the complex I 23 kDa subunit family. NDH-1 is composed of 14 different subunits. Subunits NuoA, H, J, K, L, M, N constitute the membrane sector of the complex. [4Fe-4S] cluster is required as a cofactor.

The protein resides in the cell inner membrane. The enzyme catalyses a quinone + NADH + 5 H(+)(in) = a quinol + NAD(+) + 4 H(+)(out). Its function is as follows. NDH-1 shuttles electrons from NADH, via FMN and iron-sulfur (Fe-S) centers, to quinones in the respiratory chain. The immediate electron acceptor for the enzyme in this species is believed to be ubiquinone. Couples the redox reaction to proton translocation (for every two electrons transferred, four hydrogen ions are translocated across the cytoplasmic membrane), and thus conserves the redox energy in a proton gradient. The polypeptide is NADH-quinone oxidoreductase subunit I (Ruthia magnifica subsp. Calyptogena magnifica).